We begin with the raw amino-acid sequence, 262 residues long: Aminoglycoside 3'-phosphotransferase (262 aa).

The active-site Proton acceptor is aspartate 187.

The protein belongs to the aminoglycoside phosphotransferase family. As to quaternary structure, monomer.

The protein resides in the cytoplasm. It catalyses the reaction kanamycin A + ATP = kanamycin 3'-phosphate + ADP + H(+). Resistance to butirosin and structurally-related aminoglycosides, including kanamycin and amikacin. This chain is Aminoglycoside 3'-phosphotransferase, found in Niallia circulans (Bacillus circulans).